The primary structure comprises 274 residues: Thiamine kinase (274 aa).

This sequence belongs to the thiamine kinase family.

The enzyme catalyses thiamine + ATP = thiamine phosphate + ADP + H(+). It participates in cofactor biosynthesis; thiamine diphosphate biosynthesis; thiamine phosphate from thiamine: step 1/1. In terms of biological role, catalyzes the ATP-dependent phosphorylation of thiamine to thiamine phosphate. Is involved in thiamine salvage. This chain is Thiamine kinase, found in Salmonella choleraesuis (strain SC-B67).